The primary structure comprises 169 residues: Glutathione peroxidase (169 aa).

Residue U43 is part of the active site. Position 43 (U43) is a non-standard amino acid, selenocysteine.

This sequence belongs to the glutathione peroxidase family.

The enzyme catalyses 2 glutathione + H2O2 = glutathione disulfide + 2 H2O. In Schistosoma mansoni (Blood fluke), this protein is Glutathione peroxidase (GPX1).